The primary structure comprises 538 residues: UPF0761 membrane protein PsycPRwf_0630 (538 aa).

The next 6 helical transmembrane spans lie at 43 to 63, 100 to 120, 143 to 163, 183 to 203, 215 to 235, and 247 to 267; these read LLSI…VPAL, LTAI…TTIE, WTII…SSAV, WVQV…YWFI, IAGV…GIIM, and AFAA…LILL. The disordered stretch occupies residues 427–538; that stretch reads SVFSAQDADA…IITEDDNPNK (112 aa). Over residues 482 to 493 the composition is skewed to low complexity; that stretch reads PPDADIKAAAAK. Basic and acidic residues predominate over residues 503–514; it reads KHTETAKQEHKK.

It belongs to the UPF0761 family.

It localises to the cell inner membrane. The chain is UPF0761 membrane protein PsycPRwf_0630 from Psychrobacter sp. (strain PRwf-1).